A 297-amino-acid chain; its full sequence is Bifunctional protein FolD (297 aa).

Residues 168–170 (GRS), Thr-197, and Val-238 each bind NADP(+).

Belongs to the tetrahydrofolate dehydrogenase/cyclohydrolase family. As to quaternary structure, homodimer.

It catalyses the reaction (6R)-5,10-methylene-5,6,7,8-tetrahydrofolate + NADP(+) = (6R)-5,10-methenyltetrahydrofolate + NADPH. The enzyme catalyses (6R)-5,10-methenyltetrahydrofolate + H2O = (6R)-10-formyltetrahydrofolate + H(+). Its pathway is one-carbon metabolism; tetrahydrofolate interconversion. Functionally, catalyzes the oxidation of 5,10-methylenetetrahydrofolate to 5,10-methenyltetrahydrofolate and then the hydrolysis of 5,10-methenyltetrahydrofolate to 10-formyltetrahydrofolate. This Lawsonia intracellularis (strain PHE/MN1-00) protein is Bifunctional protein FolD.